We begin with the raw amino-acid sequence, 122 residues long: Large ribosomal subunit protein uL14c (122 aa).

The protein belongs to the universal ribosomal protein uL14 family. In terms of assembly, part of the 50S ribosomal subunit.

The protein resides in the plastid. The protein localises to the chloroplast. Its function is as follows. Binds to 23S rRNA. The sequence is that of Large ribosomal subunit protein uL14c from Platanus occidentalis (Sycamore).